The chain runs to 83 residues: Cytochrome b559 subunit alpha (83 aa).

Residues 21-35 traverse the membrane as a helical segment; that stretch reads VIHSITIPSLFIAGW. His23 contributes to the heme binding site.

It belongs to the PsbE/PsbF family. As to quaternary structure, heterodimer of an alpha subunit and a beta subunit. PSII is composed of 1 copy each of membrane proteins PsbA, PsbB, PsbC, PsbD, PsbE, PsbF, PsbH, PsbI, PsbJ, PsbK, PsbL, PsbM, PsbT, PsbX, PsbY, PsbZ, Psb30/Ycf12, at least 3 peripheral proteins of the oxygen-evolving complex and a large number of cofactors. It forms dimeric complexes. The cofactor is heme b.

The protein localises to the plastid. It is found in the chloroplast thylakoid membrane. In terms of biological role, this b-type cytochrome is tightly associated with the reaction center of photosystem II (PSII). PSII is a light-driven water:plastoquinone oxidoreductase that uses light energy to abstract electrons from H(2)O, generating O(2) and a proton gradient subsequently used for ATP formation. It consists of a core antenna complex that captures photons, and an electron transfer chain that converts photonic excitation into a charge separation. The chain is Cytochrome b559 subunit alpha from Anthoceros angustus (Hornwort).